Reading from the N-terminus, the 65-residue chain is MSLPRNVIPMPRSRFLRVKCIDCGNEQIVFSHPATRVRCLVCGATLVEPTGGKGIVKAKILEVLE.

Cys20, Cys23, Cys39, and Cys42 together coordinate Zn(2+). The C4-type zinc finger occupies 20-42 (CIDCGNEQIVFSHPATRVRCLVC).

This sequence belongs to the eukaryotic ribosomal protein eS27 family. In terms of assembly, part of the 30S ribosomal subunit. Requires Zn(2+) as cofactor.

This is Small ribosomal subunit protein eS27 from Pyrococcus horikoshii (strain ATCC 700860 / DSM 12428 / JCM 9974 / NBRC 100139 / OT-3).